An 82-amino-acid chain; its full sequence is Putative defensin-like protein 134 (82 aa).

The N-terminal stretch at 1-26 (MEVRSLNLCFLLVLVLLMSPAPTAVA) is a signal peptide. 4 disulfides stabilise this stretch: cysteine 32/cysteine 79, cysteine 42/cysteine 68, cysteine 47/cysteine 74, and cysteine 51/cysteine 76.

Belongs to the DEFL family.

It is found in the secreted. This chain is Putative defensin-like protein 134, found in Arabidopsis thaliana (Mouse-ear cress).